Here is a 177-residue protein sequence, read N- to C-terminus: MINLHNAENEKEAEMQIGTPTDVKHVAHIGWDGGSVNHNPPSWMKDFKVLGGYSPALIGNIKEDASCIFEDSTRSRDIPRLPKSSRERSSTLGGSPTKERSRRRGSSQYNGNPKVSRRSSKESSAIPQDGGFNKKSRRKKSKDCVDGGSRRSSRRVRGSQVESISDSSSTSDAGYLT.

In terms of domain architecture, CRIB spans 17–30 (IGTPTDVKHVAHIG). Positions 72–89 (STRSRDIPRLPKSSRERS) are enriched in basic and acidic residues. The disordered stretch occupies residues 72-177 (STRSRDIPRL…SSTSDAGYLT (106 aa)). Low complexity predominate over residues 158–171 (GSQVESISDSSSTS).

In terms of biological role, functions as a downstream effector of Rho-related GTP binding proteins of the 'Rho of Plants' (ROPs) family. Participates in the propagation of ROP GTPase signals in specific cellular responses. The polypeptide is CRIB domain-containing protein RIC8 (RIC8) (Arabidopsis thaliana (Mouse-ear cress)).